The sequence spans 358 residues: Cholesterol galactosyltransferase (358 aa).

It belongs to the glycosyltransferase 2 family.

The enzyme catalyses cholesterol + UDP-alpha-D-galactose = cholesteryl 3-beta-D-galactoside + UDP + H(+). It functions in the pathway glycolipid biosynthesis. In terms of biological role, galactosyltransferase involved in the synthesis of cholesterol glycolipids, which are formed by the use of host-derived cholesterol and have been shown to be immunogenic, and possibly contribute to Lyme disease pathogenesis. Catalyzes the formation of cholesteryl beta-D-galactopyranoside (CGal) from cholesterol and UDP-alpha-D-galactose. Cannot use GDP-mannose. This chain is Cholesterol galactosyltransferase, found in Borreliella burgdorferi (strain ATCC 35210 / DSM 4680 / CIP 102532 / B31) (Borrelia burgdorferi).